The chain runs to 784 residues: Transcription factor E4F1 (784 aa).

The interval 41–85 (GFLGLPAPFSEEDEDDVHRCGRCQAEFTALEDFVQHKIQKACQRA) is required for ubiquitin ligase activity. Residue Ser50 is modified to Phosphoserine. The segment at 184–263 (LLVNKDGRYV…GKSFRESGAL (80 aa)) is mediates dimerization, DNA-binding, transcription repression of CCNA2 and interaction with HMGA2. 2 C2H2-type zinc fingers span residues 192 to 214 (YVCA…MVTH) and 220 to 242 (HECK…HRRH). A C2H2-type 3; degenerate zinc finger spans residues 248–272 (YKCSKCGKSFRESGALTRHLKSLTP). Residues 369–566 (NLLHQAMQNS…REKGSLVRHV (198 aa)) form a mediates interaction with CDKN2A region. C2H2-type zinc fingers lie at residues 435-457 (HPCP…KRGH), 463-485 (FACA…QEVH), 491-513 (FRCG…RRVH), 519-541 (YPCP…FRTH), and 547-569 (HVCQ…VRHH). The interval 435-599 (HPCPQCSETF…LNRHLRTKGG (165 aa)) is interaction with BMI1. The mediates interaction with TP53 stretch occupies residues 521–580 (CPKCGKRYKTKNAQQVHFRTHLEEKPHVCQFCSRGFREKGSLVRHVRHHTGEKPFKCYKC). The segment at 575–597 (FKCYKCGRGFAEHGTLNRHLRTK) adopts a C2H2-type 9; degenerate zinc-finger fold. A mediates interaction with RASSF1 region spans residues 575–597 (FKCYKCGRGFAEHGTLNRHLRTK).

As to quaternary structure, homodimer; binds DNA as a dimer. Forms a complex with CDKN2A and TP53. Interactions with TP53, RB1, ANP32A, BMI1 and FHL2 regulate E4F1 activity. Interacts with HDAC1, HMGA2 and RASSF1. (Microbial infection) Interacts with HBV protein X. In terms of processing, proteolytic cleavage produces a 50 kDa N-terminal peptide (p50E4F) which has a DNA-binding activity and activates transcription in presence of the adenoviral E1A protein. The major full-length protein (p120E4F) functions as a repressor of transcription. Post-translationally, phosphorylated; p120E4F and p50E4F are both phosphorylated. Phosphorylation is cell cycle-dependent and differentially regulates DNA-binding activity and function of both forms. May be sumoylated by UBE2I upon interaction with CDKN2A. As to expression, ubiquitously expressed.

Its subcellular location is the nucleus. The protein localises to the nucleoplasm. It is found in the cytoplasm. The catalysed reaction is S-ubiquitinyl-[E2 ubiquitin-conjugating enzyme]-L-cysteine + [acceptor protein]-L-lysine = [E2 ubiquitin-conjugating enzyme]-L-cysteine + N(6)-ubiquitinyl-[acceptor protein]-L-lysine.. It participates in protein modification; protein ubiquitination. In terms of biological role, may function as a transcriptional repressor. May also function as a ubiquitin ligase mediating ubiquitination of chromatin-associated TP53. Functions in cell survival and proliferation through control of the cell cycle. Functions in the p53 and pRB tumor suppressor pathways and regulates the cyclin CCNA2 transcription. Functionally, identified as a cellular target of the adenoviral oncoprotein E1A, it is required for both transcriptional activation and repression of viral genes. In Homo sapiens (Human), this protein is Transcription factor E4F1 (E4F1).